Reading from the N-terminus, the 687-residue chain is DNA ligase (687 aa).

Residues 34–38, 83–84, and Glu117 each bind NAD(+); these read DAEYD and SL. Lys119 serves as the catalytic N6-AMP-lysine intermediate. NAD(+)-binding residues include Arg140, Glu182, Lys298, and Lys322. Zn(2+) is bound by residues Cys416, Cys419, Cys434, and Cys439. In terms of domain architecture, BRCT spans 609–687; that stretch reads EARGPFAGKT…EEEFVRLLKE (79 aa).

Belongs to the NAD-dependent DNA ligase family. LigA subfamily. Mg(2+) serves as cofactor. It depends on Mn(2+) as a cofactor.

It carries out the reaction NAD(+) + (deoxyribonucleotide)n-3'-hydroxyl + 5'-phospho-(deoxyribonucleotide)m = (deoxyribonucleotide)n+m + AMP + beta-nicotinamide D-nucleotide.. Functionally, DNA ligase that catalyzes the formation of phosphodiester linkages between 5'-phosphoryl and 3'-hydroxyl groups in double-stranded DNA using NAD as a coenzyme and as the energy source for the reaction. It is essential for DNA replication and repair of damaged DNA. This chain is DNA ligase, found in Anaeromyxobacter dehalogenans (strain 2CP-C).